A 232-amino-acid polypeptide reads, in one-letter code: MTFQAHVVTLYPEMFPGVLGHSLAGRALERGIWSLNTVQIRDFALDKHHSVDDTPAGGGAGMVMRADVLVAAIDHCPPDLPRILLSPRGRPFNQAHARSLASDRGVVLVCGRFEGVDERVLQARKLEEISIGDYILSGGETAALVLLDALVRLLPGVMGNQASGECESFENGLLEHPHYTRPPVFEGLEIPLVLTSGHHKAIADWRQEQAEMLTQKRRPDLYAIYNKNRRKT.

S-adenosyl-L-methionine is bound by residues G111 and 131–136 (IGDYIL).

This sequence belongs to the RNA methyltransferase TrmD family. As to quaternary structure, homodimer.

The protein localises to the cytoplasm. The enzyme catalyses guanosine(37) in tRNA + S-adenosyl-L-methionine = N(1)-methylguanosine(37) in tRNA + S-adenosyl-L-homocysteine + H(+). In terms of biological role, specifically methylates guanosine-37 in various tRNAs. This Bartonella bacilliformis (strain ATCC 35685 / KC583 / Herrer 020/F12,63) protein is tRNA (guanine-N(1)-)-methyltransferase.